The chain runs to 187 residues: HTH-type dhaKLM operon transcriptional activator DhaS (187 aa).

Residues Ile12 to Leu72 enclose the HTH tetR-type domain. The H-T-H motif DNA-binding region spans Ser35–Phe54.

In terms of assembly, homodimer. Interacts with a homodimer of DhaQ.

Functionally, in complex with DhaQ, upon activation by dihydroxyacetone, activates transcription of the dhaKLM operon. Binds the inverted repeat sequence 5'-GGACACATN(6)ATTTGTCC-3' located upstream of and partially overlapping with the -35 promoter sequence of the dhaKLM operon promoter. The chain is HTH-type dhaKLM operon transcriptional activator DhaS (dhaS) from Lactococcus lactis subsp. lactis (strain IL1403) (Streptococcus lactis).